We begin with the raw amino-acid sequence, 215 residues long: 3-demethoxyubiquinol 3-hydroxylase (215 aa).

Fe cation is bound by residues Glu-64, Glu-94, His-97, Glu-146, Glu-178, and His-181.

It belongs to the COQ7 family. Fe cation serves as cofactor.

The protein resides in the cell membrane. It carries out the reaction a 5-methoxy-2-methyl-3-(all-trans-polyprenyl)benzene-1,4-diol + AH2 + O2 = a 3-demethylubiquinol + A + H2O. It participates in cofactor biosynthesis; ubiquinone biosynthesis. In terms of biological role, catalyzes the hydroxylation of 2-nonaprenyl-3-methyl-6-methoxy-1,4-benzoquinol during ubiquinone biosynthesis. This Coxiella burnetii (strain RSA 331 / Henzerling II) protein is 3-demethoxyubiquinol 3-hydroxylase.